Reading from the N-terminus, the 209-residue chain is Tektin bundle-interacting protein 1 (209 aa).

As to quaternary structure, microtubule inner protein component of sperm flagellar doublet microtubules.

The protein resides in the cytoplasm. It is found in the cytoskeleton. Its subcellular location is the cilium axoneme. It localises to the flagellum axoneme. Microtubule inner protein (MIP) part of the dynein-decorated doublet microtubules (DMTs) in cilia axoneme, which is required for motile cilia beating. Located at the center of the tektin bundle where may function to recruit tektins or stabilize the bundle. This Homo sapiens (Human) protein is Tektin bundle-interacting protein 1.